A 164-amino-acid chain; its full sequence is UPF0304 protein Ent638_2838 (164 aa).

It belongs to the UPF0304 family.

This Enterobacter sp. (strain 638) protein is UPF0304 protein Ent638_2838.